The sequence spans 260 residues: Taurine import ATP-binding protein TauB (260 aa).

One can recognise an ABC transporter domain in the interval A6–S235. G40–S47 contacts ATP.

This sequence belongs to the ABC transporter superfamily. Taurine importer (TC 3.A.1.17.1) family. The complex is composed of two ATP-binding proteins (TauB), two transmembrane proteins (TauC) and a solute-binding protein (TauA).

The protein resides in the cell inner membrane. The catalysed reaction is taurine(out) + ATP + H2O = taurine(in) + ADP + phosphate + H(+). In terms of biological role, part of the ABC transporter complex TauABC involved in taurine import. Responsible for energy coupling to the transport system. This Burkholderia pseudomallei (strain K96243) protein is Taurine import ATP-binding protein TauB.